The sequence spans 490 residues: GTPase Der (490 aa).

2 EngA-type G domains span residues 3–166 and 203–376; these read PVVA…MEDL and IKLA…DSST. GTP is bound by residues 9-16, 56-60, 118-121, 209-216, 256-260, and 321-324; these read GRPNVGKS, DTGGI, NKID, DTAGV, and NKWD. A KH-like domain is found at 377–461; sequence RRVGTSMLTR…PIRIQFKEGE (85 aa).

This sequence belongs to the TRAFAC class TrmE-Era-EngA-EngB-Septin-like GTPase superfamily. EngA (Der) GTPase family. Associates with the 50S ribosomal subunit.

Functionally, GTPase that plays an essential role in the late steps of ribosome biogenesis. This chain is GTPase Der, found in Shigella boydii serotype 18 (strain CDC 3083-94 / BS512).